The chain runs to 178 residues: Cytidylate kinase 2 (178 aa).

An ATP-binding site is contributed by 7 to 15 (GKSGCGNTT).

The protein belongs to the cytidylate kinase family. Type 2 subfamily.

It is found in the cytoplasm. It catalyses the reaction CMP + ATP = CDP + ADP. The enzyme catalyses dCMP + ATP = dCDP + ADP. This chain is Cytidylate kinase 2, found in Borreliella afzelii (strain PKo) (Borrelia afzelii).